A 375-amino-acid polypeptide reads, in one-letter code: 23S rRNA (uracil(747)-C(5))-methyltransferase RlmC (375 aa).

Residues Cys-3, Cys-11, Cys-14, and Cys-87 each contribute to the [4Fe-4S] cluster site. Residues Gln-212, Phe-241, Glu-262, and Asn-307 each coordinate S-adenosyl-L-methionine. Cys-334 acts as the Nucleophile in catalysis.

The protein belongs to the class I-like SAM-binding methyltransferase superfamily. RNA M5U methyltransferase family. RlmC subfamily.

It catalyses the reaction uridine(747) in 23S rRNA + S-adenosyl-L-methionine = 5-methyluridine(747) in 23S rRNA + S-adenosyl-L-homocysteine + H(+). Its function is as follows. Catalyzes the formation of 5-methyl-uridine at position 747 (m5U747) in 23S rRNA. In Yersinia enterocolitica serotype O:8 / biotype 1B (strain NCTC 13174 / 8081), this protein is 23S rRNA (uracil(747)-C(5))-methyltransferase RlmC.